A 173-amino-acid polypeptide reads, in one-letter code: Peptide methionine sulfoxide reductase MsrA (173 aa).

The active site involves Cys-10.

Belongs to the MsrA Met sulfoxide reductase family.

It carries out the reaction L-methionyl-[protein] + [thioredoxin]-disulfide + H2O = L-methionyl-(S)-S-oxide-[protein] + [thioredoxin]-dithiol. The enzyme catalyses [thioredoxin]-disulfide + L-methionine + H2O = L-methionine (S)-S-oxide + [thioredoxin]-dithiol. Functionally, has an important function as a repair enzyme for proteins that have been inactivated by oxidation. Catalyzes the reversible oxidation-reduction of methionine sulfoxide in proteins to methionine. This chain is Peptide methionine sulfoxide reductase MsrA, found in Psychrobacter cryohalolentis (strain ATCC BAA-1226 / DSM 17306 / VKM B-2378 / K5).